The chain runs to 606 residues: Serine/threonine-protein kinase A-Raf (606 aa).

The RBD domain occupies 19-91; sequence GTVKVYLPNK…DGEELIVEVL (73 aa). The Phorbol-ester/DAG-type zinc finger occupies 98-144; sequence MHNFVRKTFFSLAFCDFCLKFLFHGFRCQTCGYKFHQHCSSKVPTVC. Zn(2+) is bound by residues histidine 99, cysteine 112, cysteine 115, cysteine 125, cysteine 128, histidine 133, cysteine 136, and cysteine 144. Serine 157 and serine 162 each carry phosphoserine. Disordered stretches follow at residues 158–207 and 241–290; these read VQDL…NAPL and TDAA…DKKK. The residue at position 181 (threonine 181) is a Phosphothreonine. Phosphoserine occurs at positions 186, 257, and 269. Positions 254-267 are enriched in low complexity; the sequence is PRGSPSPASVSSGR. The segment covering 274-289 has biased composition (basic and acidic residues); that stretch reads SPSEQRERKSLADDKK. In terms of domain architecture, Protein kinase spans 310-570; sequence VQLLKRIGTG…PQILATIELL (261 aa). ATP contacts are provided by residues 316 to 324 and lysine 336; that span reads IGTGSFGTV. Position 318 is a phosphothreonine (threonine 318). The active-site Proton acceptor is the aspartate 429.

Belongs to the protein kinase superfamily. TKL Ser/Thr protein kinase family. RAF subfamily. In terms of assembly, interacts with TH1L/NELFD. Zn(2+) serves as cofactor. Dephosphorylation by the SHOC2-MRAS-PP1c (SMP) complex consisting of SHOC2, GTP-bound M-Ras/MRAS and the catalytic subunit of protein phosphatase 1 (PPP1CA, PPP1CB or PPP1CC); this relieves inactivation and stimulates kinase activity.

The enzyme catalyses L-seryl-[protein] + ATP = O-phospho-L-seryl-[protein] + ADP + H(+). It carries out the reaction L-threonyl-[protein] + ATP = O-phospho-L-threonyl-[protein] + ADP + H(+). Functionally, involved in the transduction of mitogenic signals from the cell membrane to the nucleus. May also regulate the TOR signaling cascade. Phosphorylates PFKFB2. This is Serine/threonine-protein kinase A-Raf (ARAF) from Sus scrofa (Pig).